Reading from the N-terminus, the 208-residue chain is Anti-sigma-W factor RsiW (208 aa).

Topologically, residues 1–87 (MSCPEQIVQL…ASVKRWFRTH (87 aa)) are cytoplasmic. Positions 3, 30, 34, and 37 each coordinate Zn(2+). A helical transmembrane segment spans residues 88 to 108 (PVIAAAAVFIILMGGGFFNSW). Residues 109 to 208 (HNDHNFSVSK…LDAFNPNGEE (100 aa)) lie on the Extracellular side of the membrane.

This sequence belongs to the zinc-associated anti-sigma factor (ZAS) superfamily. Anti-sigma-W factor family. Forms a heterodimer with cognate sigma factor SigW, which probably prevents SigW from binding to DNA. It depends on Zn(2+) as a cofactor. Post-translationally, is processed by successive proteolytic events. First, the extracellular region of RsiW is cleaved by PrsW (site-1 cleavage) in response to cell envelope stresses. In a reconstituted E.coli system PrsW cuts between Ala-168 and Ser-169 followed by trimming by E.coli Tsp; the endogenous extracellular exopeptidase responsible for the event in B.subtilis has not been identified. Next, it undergoes cleavage at an intramembrane site (site-2 cleavage) mediated by RasP. This cleavage uncovers a cryptic proteolytic tag with conserved alanine residues in the transmembrane segment, that is recognized mainly by the ClpXP protease, which completely degrades the protein in the cytoplasm and leads to the induction of the sigma-W-controlled genes.

It localises to the cell membrane. The anti-sigma factor for extracytoplasmic function (ECF) sigma factor sigma-W (SigW). Holds SigW, its cognate ECF sigma factor, in an inactive form until released by regulated intramembrane proteolysis (RIP). SigW and RsiW mediate cell response to cell wall stress. RIP occurs when an extracytoplasmic signal triggers a concerted proteolytic cascade to transmit information and elicit cellular responses. The membrane-spanning regulatory substrate protein is first cut periplasmically (site-1 protease, S1P, PrsW), then within the membrane itself (site-2 protease, S2P, RasP), while cytoplasmic proteases finish degrading the anti-sigma factor, liberating sigma-W. The polypeptide is Anti-sigma-W factor RsiW (rsiW) (Bacillus subtilis (strain 168)).